Here is an 81-residue protein sequence, read N- to C-terminus: Acyl carrier protein (81 aa).

Positions 4–79 (DEVYSRVRKI…DAVNYILSKK (76 aa)) constitute a Carrier domain. Ser-39 carries the post-translational modification O-(pantetheine 4'-phosphoryl)serine.

It belongs to the acyl carrier protein (ACP) family. In terms of processing, 4'-phosphopantetheine is transferred from CoA to a specific serine of apo-ACP by AcpS. This modification is essential for activity because fatty acids are bound in thioester linkage to the sulfhydryl of the prosthetic group.

The protein localises to the cytoplasm. It functions in the pathway lipid metabolism; fatty acid biosynthesis. Carrier of the growing fatty acid chain in fatty acid biosynthesis. In Synechococcus sp. (strain JA-3-3Ab) (Cyanobacteria bacterium Yellowstone A-Prime), this protein is Acyl carrier protein.